We begin with the raw amino-acid sequence, 273 residues long: WIMGHMVNAIAQIDEFVNLGANSIETDVSFDKNANPEYTYHGIPCGCGRTCTKSEKFNVFLQGLQKATTPGDSKYQEKLVLVVFDLKSSSLYDNQASDAGKKLAKSLLQNYWKNGNNGGRAYIVLSIPNLAHYKLITGFKETLKTEGHPELMEKVGYDFFGNDDIDQVAKAYKKAGVTGHVWQSDGITNCLPRGLDRVKQAVANRDSSNGFINKVYYWTVDKRSTTRGALDAGVDGIMTNYPDVIADVLSESAYKSKFRIATYEDNPWETFKN.

Residue H5 is part of the active site. The Mg(2+) site is built by E25 and D27. H41 serves as the catalytic Nucleophile. Intrachain disulfides connect C45–C51 and C47–C190. D85 is a binding site for Mg(2+).

Belongs to the arthropod phospholipase D family. Class II subfamily. It depends on Mg(2+) as a cofactor. In terms of tissue distribution, expressed by the venom gland.

The protein localises to the secreted. It catalyses the reaction an N-(acyl)-sphingosylphosphocholine = an N-(acyl)-sphingosyl-1,3-cyclic phosphate + choline. The catalysed reaction is an N-(acyl)-sphingosylphosphoethanolamine = an N-(acyl)-sphingosyl-1,3-cyclic phosphate + ethanolamine. It carries out the reaction a 1-acyl-sn-glycero-3-phosphocholine = a 1-acyl-sn-glycero-2,3-cyclic phosphate + choline. The enzyme catalyses a 1-acyl-sn-glycero-3-phosphoethanolamine = a 1-acyl-sn-glycero-2,3-cyclic phosphate + ethanolamine. Dermonecrotic toxins cleave the phosphodiester linkage between the phosphate and headgroup of certain phospholipids (sphingolipid and lysolipid substrates), forming an alcohol (often choline) and a cyclic phosphate. This toxin acts on sphingomyelin (SM). It may also act on ceramide phosphoethanolamine (CPE), lysophosphatidylcholine (LPC) and lysophosphatidylethanolamine (LPE), but not on lysophosphatidylserine (LPS), and lysophosphatidylglycerol (LPG). It acts by transphosphatidylation, releasing exclusively cyclic phosphate products as second products. Induces dermonecrosis, hemolysis, increased vascular permeability, edema, inflammatory response, and platelet aggregation. This is Dermonecrotic toxin LdSicTox-alphaIB3aiv from Loxosceles deserta (Desert recluse spider).